The sequence spans 246 residues: tRNA pseudouridine synthase A (246 aa).

Aspartate 51 acts as the Nucleophile in catalysis. Tyrosine 105 is a binding site for substrate.

Belongs to the tRNA pseudouridine synthase TruA family.

The catalysed reaction is uridine(38/39/40) in tRNA = pseudouridine(38/39/40) in tRNA. In terms of biological role, formation of pseudouridine at positions 38, 39 and 40 in the anticodon stem and loop of transfer RNAs. This chain is tRNA pseudouridine synthase A, found in Thermoplasma volcanium (strain ATCC 51530 / DSM 4299 / JCM 9571 / NBRC 15438 / GSS1).